The chain runs to 863 residues: Receptor-like protein 9DC1 (863 aa).

A signal peptide spans 1 to 21 (MGCVKLVFFMLYVFLFQLVSS). Over 22–812 (SSLPHLCPED…EEDSPMISWQ (791 aa)) the chain is Extracellular. Residues 24–90 (LPHLCPEDQA…GVHCDETTGQ (67 aa)) form an N-cap region. Residues Asn-71 and Asn-108 are each glycosylated (N-linked (GlcNAc...) asparagine). One copy of the LRR 1; degenerate repeat lies at 91-114 (VIALDLRCSQLQGKFHSNSSLFQL). LRR repeat units follow at residues 115–138 (SNLKRLDLSNNNFIGSLISPKFGE) and 140–163 (SDLTHLDLSDSSFTGVIPSEISHL). An LRR 4; degenerate repeat occupies 164–190 (SKLHVLLIGDQYGLSIVPHNFEPLLKN). Asn-190, Asn-203, and Asn-211 each carry an N-linked (GlcNAc...) asparagine glycan. 6 LRR repeats span residues 191 to 213 (LTQLRELNLYEVNLSSTVPSNFS), 214 to 237 (SHLTTLQLSGTGLRGLLPERVFHL), 240 to 262 (LEFLDLSYNSQLMVRFPTTKWNS), 264 to 286 (ASLMKLYVHSVNIADRIPESFSH), 287 to 311 (LTSLHELDMGYTNLSGPIPKPLWNL), and 312 to 336 (TNIESLDLRYNHLEGPIPQLPIFEK). Asn-261 is a glycosylation site (N-linked (GlcNAc...) asparagine). 2 N-linked (GlcNAc...) asparagine glycosylation sites follow: Asn-299 and Asn-310. One copy of the LRR 11; degenerate repeat lies at 337–357 (LKKLSLFRNDNLDGGLEFLSF). 15 LRR repeats span residues 358-382 (NTQLERLDLSSNSLTGPIPSNISGL), 383-406 (QNLECLYLSSNHLNGSIPSWIFSL), 408-428 (SLVELDLSNNTFSGKIQEFKS), 429-452 (KTLSAVTLKQNKLKGRIPNSLLNQ), 454-476 (NLQLLLLSHNNISGHISSAICNL), 477-500 (KTLILLDLGSNNLEGTIPQCVVER), 502-524 (EYLSHLDLSKNRLSGTINTTFSV), 525-549 (GNILRVISLHGNKLTGKVPRSMINC), 551-572 (YLTLLDLGNNMLNDTFPNWLGY), 573-597 (LFQLKILSLRSNKLHGPIKSSGNTN), 599-623 (FMGLQILDLSSNGFSGNLPERILGN), 667-690 (LDSNMIINLSKNRFEGHIPSIIGD), 691-714 (LVGLRTLNLSHNVLEGHIPASFQN), 715-739 (LSVLESLDLSSNKISGEIPQQLASL), and 741-759 (FLEVLNLSHNHLVGCIPKG). N-linked (GlcNAc...) asparagine glycosylation is found at Asn-378, Asn-396, and Asn-416. N-linked (GlcNAc...) asparagine glycosylation occurs at Asn-464. The N-linked (GlcNAc...) asparagine glycan is linked to Asn-519. Asn-563 is a glycosylation site (N-linked (GlcNAc...) asparagine). N-linked (GlcNAc...) asparagine glycosylation is found at Asn-674, Asn-698, and Asn-714. 2 N-linked (GlcNAc...) asparagine glycosylation sites follow: Asn-746 and Asn-767. The tract at residues 760 to 812 (KQFDSFGNTSYQGNDGLRGFPLSKLCGGEDQVTTPAELDQEEEEEDSPMISWQ) is C-cap/acidic domain. A helical transmembrane segment spans residues 813–833 (GVLVGYGCGLVIGLSVIYIMW). Over 834–863 (STQYPAWFSRMDLKLEHIITTKMKKHKKRY) the chain is Cytoplasmic.

This sequence belongs to the RLP family.

It localises to the cell membrane. Functionally, involved in plant defense. Confers resistance to the fungal pathogen C.fulvum through recognition of the AVR9 elicitor protein. In Solanum pimpinellifolium (Currant tomato), this protein is Receptor-like protein 9DC1.